The following is a 417-amino-acid chain: MVTSPELKAYAQAARAAARALSTASPRAKNTALLAIAAKLEAQQEALFAANREDLEAAQAAGLSKAKLDRLRLDEKVLRDLRTGLQQVAEMPDPVGEIEGLQIRPNGLQVGRMRVPLGVIGFIYESRPNATVEASALCLKAGNAILLRGGKEAWHSNRALVGLMQAALQEAGLPREAIQLVPTTDRSAILEMCHLADLLDLIIPRGGRGLIELVQREARIPVLAHTEGINHLFVDESTDPGCAVQIALNGKTQRPSTCNSLEKVLVHQRIAPVFLPMLAQAMQKAGVELRGDEATCALIPARPATPEDWQTEYLDLILTVKVVNSLEEALEHIARYGSHHTEAICTNHHAHAMRFLREVDASLVLVNASPRFNDGFQLGLGAEIGISTSKLHAYGPMGVKELTTTKFVALGSGQVRD.

This sequence belongs to the gamma-glutamyl phosphate reductase family.

It is found in the cytoplasm. The catalysed reaction is L-glutamate 5-semialdehyde + phosphate + NADP(+) = L-glutamyl 5-phosphate + NADPH + H(+). Its pathway is amino-acid biosynthesis; L-proline biosynthesis; L-glutamate 5-semialdehyde from L-glutamate: step 2/2. Functionally, catalyzes the NADPH-dependent reduction of L-glutamate 5-phosphate into L-glutamate 5-semialdehyde and phosphate. The product spontaneously undergoes cyclization to form 1-pyrroline-5-carboxylate. The polypeptide is Gamma-glutamyl phosphate reductase (Meiothermus ruber).